A 195-amino-acid chain; its full sequence is ATP-dependent Clp protease proteolytic subunit (195 aa).

Ser-98 acts as the Nucleophile in catalysis. His-123 is a catalytic residue.

This sequence belongs to the peptidase S14 family. Fourteen ClpP subunits assemble into 2 heptameric rings which stack back to back to give a disk-like structure with a central cavity, resembling the structure of eukaryotic proteasomes.

It is found in the cytoplasm. It catalyses the reaction Hydrolysis of proteins to small peptides in the presence of ATP and magnesium. alpha-casein is the usual test substrate. In the absence of ATP, only oligopeptides shorter than five residues are hydrolyzed (such as succinyl-Leu-Tyr-|-NHMec, and Leu-Tyr-Leu-|-Tyr-Trp, in which cleavage of the -Tyr-|-Leu- and -Tyr-|-Trp bonds also occurs).. Its function is as follows. Cleaves peptides in various proteins in a process that requires ATP hydrolysis. Has a chymotrypsin-like activity. Plays a major role in the degradation of misfolded proteins. In Helicobacter pylori (strain J99 / ATCC 700824) (Campylobacter pylori J99), this protein is ATP-dependent Clp protease proteolytic subunit.